Reading from the N-terminus, the 440-residue chain is UDP-N-acetylmuramoylalanine--D-glutamate ligase (440 aa).

113–119 is a binding site for ATP; it reads GTNGKST.

It belongs to the MurCDEF family.

It is found in the cytoplasm. The enzyme catalyses UDP-N-acetyl-alpha-D-muramoyl-L-alanine + D-glutamate + ATP = UDP-N-acetyl-alpha-D-muramoyl-L-alanyl-D-glutamate + ADP + phosphate + H(+). It functions in the pathway cell wall biogenesis; peptidoglycan biosynthesis. In terms of biological role, cell wall formation. Catalyzes the addition of glutamate to the nucleotide precursor UDP-N-acetylmuramoyl-L-alanine (UMA). This chain is UDP-N-acetylmuramoylalanine--D-glutamate ligase (murD), found in Buchnera aphidicola subsp. Acyrthosiphon pisum (strain APS) (Acyrthosiphon pisum symbiotic bacterium).